The following is a 1620-amino-acid chain: NAD-specific glutamate dehydrogenase (1620 aa).

The active site involves Lys-851.

The protein belongs to the Glu/Leu/Phe/Val dehydrogenases family. Homotetramer. In terms of processing, contains disulfide bonds (interchain).

It carries out the reaction L-glutamate + NAD(+) + H2O = 2-oxoglutarate + NH4(+) + NADH + H(+). Activity subject to allosteric control by arginine and citrate, which function as positive and negative effectors, respectively. Its function is as follows. Involved in arginine catabolism by converting L-glutamate, into 2-oxoglutarate, which is then channeled into the tricarboxylic acid cycle. Can also utilize other amino acids of the glutamate family. The sequence is that of NAD-specific glutamate dehydrogenase (gdhB) from Pseudomonas aeruginosa (strain ATCC 15692 / DSM 22644 / CIP 104116 / JCM 14847 / LMG 12228 / 1C / PRS 101 / PAO1).